The following is a 563-amino-acid chain: Lipoprotein LpqB (563 aa).

Positions 1-19 (MRRMKALTAAMTAALLVSG) are cleaved as a signal peptide. The N-palmitoyl cysteine moiety is linked to residue Cys-20. Residue Cys-20 is the site of S-diacylglycerol cysteine attachment.

This sequence belongs to the LpqB lipoprotein family.

The protein localises to the cell membrane. This Corynebacterium efficiens (strain DSM 44549 / YS-314 / AJ 12310 / JCM 11189 / NBRC 100395) protein is Lipoprotein LpqB.